Consider the following 335-residue polypeptide: Tetraacyldisaccharide 4'-kinase (335 aa).

Residue 59–66 (TAGGNGKT) coordinates ATP.

This sequence belongs to the LpxK family.

The catalysed reaction is a lipid A disaccharide + ATP = a lipid IVA + ADP + H(+). The protein operates within glycolipid biosynthesis; lipid IV(A) biosynthesis; lipid IV(A) from (3R)-3-hydroxytetradecanoyl-[acyl-carrier-protein] and UDP-N-acetyl-alpha-D-glucosamine: step 6/6. Functionally, transfers the gamma-phosphate of ATP to the 4'-position of a tetraacyldisaccharide 1-phosphate intermediate (termed DS-1-P) to form tetraacyldisaccharide 1,4'-bis-phosphate (lipid IVA). The polypeptide is Tetraacyldisaccharide 4'-kinase (Vibrio vulnificus (strain YJ016)).